Reading from the N-terminus, the 360-residue chain is Probable nuclear hormone receptor HR38 (360 aa).

Residues G1–S21 are disordered. A DNA-binding region (nuclear receptor) is located at residues S23–T98. 2 NR C4-type zinc fingers span residues C26–C46 and C62–C86. The NR LBD domain maps to P122–S357.

It belongs to the nuclear hormone receptor family. NR4 subfamily. As to quaternary structure, forms a heterodimer with USP.

It is found in the nucleus. This is Probable nuclear hormone receptor HR38 (HR38) from Bombyx mori (Silk moth).